We begin with the raw amino-acid sequence, 429 residues long: Adenylosuccinate synthetase (429 aa).

Residues 13-19 and 41-43 each bind GTP; these read GDEGKGK and GHT. Aspartate 14 serves as the catalytic Proton acceptor. Aspartate 14 and glycine 41 together coordinate Mg(2+). IMP is bound by residues 14–17, 39–42, threonine 130, arginine 144, glutamine 225, threonine 240, and arginine 304; these read DEGK and NAGH. The active-site Proton donor is histidine 42. Residue 300 to 306 coordinates substrate; that stretch reads ATTGRAR. GTP-binding positions include arginine 306, 332–334, and 413–415; these read KLD and STG.

It belongs to the adenylosuccinate synthetase family. In terms of assembly, homodimer. The cofactor is Mg(2+).

Its subcellular location is the cytoplasm. It catalyses the reaction IMP + L-aspartate + GTP = N(6)-(1,2-dicarboxyethyl)-AMP + GDP + phosphate + 2 H(+). The protein operates within purine metabolism; AMP biosynthesis via de novo pathway; AMP from IMP: step 1/2. Its function is as follows. Plays an important role in the de novo pathway of purine nucleotide biosynthesis. Catalyzes the first committed step in the biosynthesis of AMP from IMP. In Pseudomonas fluorescens (strain Pf0-1), this protein is Adenylosuccinate synthetase.